The following is a 463-amino-acid chain: ATP synthase subunit beta (463 aa).

152-159 provides a ligand contact to ATP; the sequence is GGAGVGKT.

It belongs to the ATPase alpha/beta chains family. As to quaternary structure, F-type ATPases have 2 components, CF(1) - the catalytic core - and CF(0) - the membrane proton channel. CF(1) has five subunits: alpha(3), beta(3), gamma(1), delta(1), epsilon(1). CF(0) has three main subunits: a(1), b(2) and c(9-12). The alpha and beta chains form an alternating ring which encloses part of the gamma chain. CF(1) is attached to CF(0) by a central stalk formed by the gamma and epsilon chains, while a peripheral stalk is formed by the delta and b chains.

The protein localises to the cell inner membrane. It catalyses the reaction ATP + H2O + 4 H(+)(in) = ADP + phosphate + 5 H(+)(out). Its function is as follows. Produces ATP from ADP in the presence of a proton gradient across the membrane. The catalytic sites are hosted primarily by the beta subunits. The protein is ATP synthase subunit beta of Shewanella denitrificans (strain OS217 / ATCC BAA-1090 / DSM 15013).